The chain runs to 714 residues: ABC transporter B family member 28 (714 aa).

A run of 5 helical transmembrane segments spans residues 109 to 129, 161 to 181, 240 to 260, 340 to 360, and 361 to 381; these read LSVC…MPVF, IFTI…MAIL, ICIL…LMLA, VAVY…VKTG, and ELAV…TFAV. In terms of domain architecture, ABC transmembrane type-1 spans 109–393; the sequence is LSVCLLTLLG…LVNTFGDLRG (285 aa). The region spanning 470–708 is the ABC transporter domain; it reads VCLDDVHFAY…KGSYASLVGT (239 aa). 505–512 contacts ATP; it reads GSSGAGKS.

The protein belongs to the ABC transporter superfamily. ABCB family. Multidrug resistance exporter (TC 3.A.1.201) subfamily.

The protein localises to the membrane. This Arabidopsis thaliana (Mouse-ear cress) protein is ABC transporter B family member 28 (ABCB28).